The primary structure comprises 165 residues: Large ribosomal subunit protein uL11 (165 aa).

Ser38 is subject to Phosphoserine. A Glycyl lysine isopeptide (Lys-Gly) (interchain with G-Cter in SUMO2) cross-link involves residue Lys40. Lys48 is covalently cross-linked (Glycyl lysine isopeptide (Lys-Gly) (interchain with G-Cter in ubiquitin)). Residue Lys54 is modified to N6-acetyllysine. Lys83 is covalently cross-linked (Glycyl lysine isopeptide (Lys-Gly) (interchain with G-Cter in ubiquitin)). Residue Ser165 is modified to Phosphoserine.

This sequence belongs to the universal ribosomal protein uL11 family. As to quaternary structure, component of the large ribosomal subunit. Mature ribosomes consist of a small (40S) and a large (60S) subunit. The 40S subunit contains about 33 different proteins and 1 molecule of RNA (18S). The 60S subunit contains about 49 different proteins and 3 molecules of RNA (28S, 5.8S and 5S). In terms of processing, ubiquitinated at Lys-48 and Lys-83 by RNF14 and RNF25 in response to ribosome collisions (ribosome stalling).

It is found in the cytoplasm. Its function is as follows. Component of the large ribosomal subunit. The ribosome is a large ribonucleoprotein complex responsible for the synthesis of proteins in the cell. Binds directly to 26S ribosomal RNA. This is Large ribosomal subunit protein uL11 (Rpl12) from Rattus norvegicus (Rat).